A 294-amino-acid chain; its full sequence is Acetylglutamate kinase (294 aa).

Residues 64–65 (GG), R86, and N189 each bind substrate.

Belongs to the acetylglutamate kinase family. ArgB subfamily.

It is found in the cytoplasm. It catalyses the reaction N-acetyl-L-glutamate + ATP = N-acetyl-L-glutamyl 5-phosphate + ADP. It participates in amino-acid biosynthesis; L-arginine biosynthesis; N(2)-acetyl-L-ornithine from L-glutamate: step 2/4. Catalyzes the ATP-dependent phosphorylation of N-acetyl-L-glutamate. The polypeptide is Acetylglutamate kinase (Carboxydothermus hydrogenoformans (strain ATCC BAA-161 / DSM 6008 / Z-2901)).